A 312-amino-acid chain; its full sequence is MAAPEAEAQETAFRTTGPPTDSEPRPFPPSSRKFPFESAAADSNEDWAVAAEHYLKGSGENGGWEQPAPGVQPSHPATMASAKTVCDAQPHSMPSCGLPADTQTRATSKLPVKSKEADLLRHLHPGGPEPDVTKVTKSRRENGQVKAAETASRRNLRNSYKPFNKQKPEEELKDKNELLEAVNKQLHQKLTETQGELKDLTQKVELLEKFQDNCLALLESKGLNPGQETLASKQEPTTDHTDSMLLLETLKDELKVFNETAKKQMEELQALKVKLKLKEEESVQFLEQQTLCKDEASDFTIILEEMEQLLEM.

The disordered stretch occupies residues 1 to 171 (MAAPEAEAQE…PFNKQKPEEE (171 aa)). Basic and acidic residues predominate over residues 131-143 (DVTKVTKSRRENG). The interval 156 to 312 (LRNSYKPFNK…LEEMEQLLEM (157 aa)) is interaction with SPAG5. Coiled coils occupy residues 166 to 210 (QKPE…LEKF) and 246 to 287 (LLET…QFLE).

Part of an astrin (SPAG5)-kinastrin (SKAP) complex containing KNSTRN, SPAG5, PLK1, DYNLL1 and SGO2A. Interacts with SPAG5. Directly binds to microtubules, although at relatively low affinity. Interacts with CENPE; this interaction greatly favors microtubule-binding. Interacts with DSN1/MIS13; leading to localization to kinetochores. Interacts with MAPRE1/EB1; leading to localization to the microtubule plus ends. Interacts with PRPF19. Interacts with DYNLL1. Interacts with MAP4.

The protein localises to the nucleus. The protein resides in the chromosome. It localises to the centromere. It is found in the kinetochore. Its subcellular location is the cytoplasm. The protein localises to the cytoskeleton. The protein resides in the spindle pole. It localises to the microtubule organizing center. Functionally, essential component of the mitotic spindle required for faithful chromosome segregation and progression into anaphase. Promotes the metaphase-to-anaphase transition and is required for chromosome alignment, normal timing of sister chromatid segregation, and maintenance of spindle pole architecture. The astrin (SPAG5)-kinastrin (SKAP) complex promotes stable microtubule-kinetochore attachments. Required for kinetochore oscillations and dynamics of microtubule plus-ends during live cell mitosis, possibly by forming a link between spindle microtubule plus-ends and mitotic chromosomes to achieve faithful cell division. The sequence is that of Small kinetochore-associated protein (Knstrn) from Mus musculus (Mouse).